Consider the following 492-residue polypeptide: Cell division protein FtsA (492 aa).

Disordered regions lie at residues 288 to 307 (GEETPSQNVQIPTTGSDGHE) and 429 to 458 (YTRTAHQSSPTPHIHSSPTERNLSDLKAPS). Residues 291-303 (TPSQNVQIPTTGS) are compositionally biased toward polar residues. A compositionally biased stretch (low complexity) spans 436 to 447 (SSPTPHIHSSPT).

It belongs to the FtsA/MreB family. Self-interacts. Interacts with FtsZ.

The protein resides in the cell inner membrane. Cell division protein that is involved in the assembly of the Z ring. May serve as a membrane anchor for the Z ring. In Helicobacter pylori (strain ATCC 700392 / 26695) (Campylobacter pylori), this protein is Cell division protein FtsA.